Reading from the N-terminus, the 251-residue chain is Protection of telomeres homolog 2 (251 aa).

Residues 221–251 (ELDNWPEGPPKTFAEAIARANNSRRPRDPPQ) form a disordered region.

Belongs to the telombin family.

It is found in the nucleus. The protein resides in the chromosome. Its subcellular location is the telomere. Functionally, telomeric DNA-binding protein, which binds to two or more single-stranded G-rich repeat sequences (G-strand), with high specificity to the 5'-TTAGGC-3' sequence. In addition, repeat sequence binding requires a 3' single-stranded telomeric overhang. Acts redundantly with pot-1 to negatively regulate telomerase-mediated telomere extension. Also regulates telomere length by the telomerase-independent telomere maintenance pathway called ALT (alternative lengthening of telomeres). Does not appear to have a role in anchoring telomeres to the nuclear envelope. The chain is Protection of telomeres homolog 2 from Caenorhabditis elegans.